Consider the following 212-residue polypeptide: Ribonuclease HII (212 aa).

The 204-residue stretch at 1–204 folds into the RNase H type-2 domain; it reads MRVGIDEAGR…LRSTAPLYYI (204 aa). A divalent metal cation is bound by residues D6, E7, and D103.

This sequence belongs to the RNase HII family. The cofactor is Mn(2+). Mg(2+) serves as cofactor.

It is found in the cytoplasm. The catalysed reaction is Endonucleolytic cleavage to 5'-phosphomonoester.. In terms of biological role, endonuclease that specifically degrades the RNA of RNA-DNA hybrids. This Saccharolobus solfataricus (strain ATCC 35092 / DSM 1617 / JCM 11322 / P2) (Sulfolobus solfataricus) protein is Ribonuclease HII.